Consider the following 587-residue polypeptide: Dynein axonemal intermediate chain 2 (587 aa).

WD repeat units follow at residues 214–254, 261–302, 362–401, and 405–445; these read RPAS…NPVE, SHRD…EPTE, GHHGPIYSIQRNPFFPKNFLTVGDWTARIWSEDCRESSIM, and YHTS…NNPS. Disordered stretches follow at residues 519–542 and 562–587; these read LKERSKAEPGEEVKDEKPAEDMKE and KEQQEIKQSEDEHQEKEVSEEKIVHE.

It belongs to the dynein intermediate chain family. As to quaternary structure, consists of at least two heavy chains and a number of intermediate and light chains. Interacts with DNAAF2. Interacts with DNAAF6/PIH1D3. Interacts with HEATR2; probably involved in outer arm dynein assembly. Interacts with C16ORF71/DAAP1.

The protein localises to the cytoplasm. It localises to the cytoskeleton. Its subcellular location is the cilium axoneme. It is found in the dynein axonemal particle. Functionally, part of the dynein complex of multiciliated cell cilia. The polypeptide is Dynein axonemal intermediate chain 2 (dnai2) (Xenopus laevis (African clawed frog)).